Reading from the N-terminus, the 34-residue chain is Photosystem II reaction center protein Psb30 (34 aa).

A helical transmembrane segment spans residues 6–26 (VIGQLLSATLIVLAGPAVIFV).

It belongs to the Psb30/Ycf12 family. PSII is composed of 1 copy each of membrane proteins PsbA, PsbB, PsbC, PsbD, PsbE, PsbF, PsbH, PsbI, PsbJ, PsbK, PsbL, PsbM, PsbT, PsbX, PsbY, PsbZ, Psb30/Ycf12, peripheral proteins of the oxygen-evolving complex and a large number of cofactors. It forms dimeric complexes.

It localises to the plastid. It is found in the chloroplast thylakoid membrane. Functionally, a core subunit of photosystem II (PSII), probably helps stabilize the reaction center. In Heterosigma akashiwo (strain NIES-293 / 8280G21-1), this protein is Photosystem II reaction center protein Psb30.